Reading from the N-terminus, the 234-residue chain is Segregation and condensation protein A (234 aa).

The protein belongs to the ScpA family. Component of a cohesin-like complex composed of ScpA, ScpB and the Smc homodimer, in which ScpA and ScpB bind to the head domain of Smc. The presence of the three proteins is required for the association of the complex with DNA.

The protein resides in the cytoplasm. Its function is as follows. Participates in chromosomal partition during cell division. May act via the formation of a condensin-like complex containing Smc and ScpB that pull DNA away from mid-cell into both cell halves. This chain is Segregation and condensation protein A, found in Streptococcus pyogenes serotype M3 (strain ATCC BAA-595 / MGAS315).